The primary structure comprises 210 residues: Peptidyl-tRNA hydrolase (210 aa).

A tRNA-binding site is contributed by tyrosine 30. The active-site Proton acceptor is the histidine 35. TRNA contacts are provided by tyrosine 81, asparagine 83, and asparagine 129.

Belongs to the PTH family. Monomer.

Its subcellular location is the cytoplasm. The catalysed reaction is an N-acyl-L-alpha-aminoacyl-tRNA + H2O = an N-acyl-L-amino acid + a tRNA + H(+). Functionally, hydrolyzes ribosome-free peptidyl-tRNAs (with 1 or more amino acids incorporated), which drop off the ribosome during protein synthesis, or as a result of ribosome stalling. Its function is as follows. Catalyzes the release of premature peptidyl moieties from peptidyl-tRNA molecules trapped in stalled 50S ribosomal subunits, and thus maintains levels of free tRNAs and 50S ribosomes. The protein is Peptidyl-tRNA hydrolase of Bordetella petrii (strain ATCC BAA-461 / DSM 12804 / CCUG 43448).